A 308-amino-acid polypeptide reads, in one-letter code: HPr kinase/phosphorylase (308 aa).

Residues His-138 and Lys-159 contribute to the active site. 153–160 is an ATP binding site; it reads GESGLGKS. Residue Ser-160 participates in Mg(2+) binding. The Proton acceptor; for phosphorylation activity. Proton donor; for dephosphorylation activity role is filled by Asp-177. The segment at 201-210 is important for the catalytic mechanism of both phosphorylation and dephosphorylation; the sequence is LEVRGLGLLD. Position 202 (Glu-202) interacts with Mg(2+). The active site involves Arg-243. The segment at 264–269 is important for the catalytic mechanism of dephosphorylation; that stretch reads QVAAGR.

Belongs to the HPrK/P family. Homohexamer. Requires Mg(2+) as cofactor.

It catalyses the reaction [HPr protein]-L-serine + ATP = [HPr protein]-O-phospho-L-serine + ADP + H(+). The enzyme catalyses [HPr protein]-O-phospho-L-serine + phosphate + H(+) = [HPr protein]-L-serine + diphosphate. Functionally, catalyzes the ATP- as well as the pyrophosphate-dependent phosphorylation of a specific serine residue in HPr, a phosphocarrier protein of the phosphoenolpyruvate-dependent sugar phosphotransferase system (PTS). HprK/P also catalyzes the pyrophosphate-producing, inorganic phosphate-dependent dephosphorylation (phosphorolysis) of seryl-phosphorylated HPr (P-Ser-HPr). The protein is HPr kinase/phosphorylase of Bordetella avium (strain 197N).